Here is a 134-residue protein sequence, read N- to C-terminus: Complexin-1 (134 aa).

2 disordered regions span residues 1 to 60 and 74 to 113; these read MEFV…AERE and KKEEREAEAQAAMEANSEGSLTRPKKAIPPGCGDEVEEED. Over residues 15-60 the composition is skewed to basic and acidic residues; sequence DMGKMLGGDEEKDPDAAKKEEERQEALRQAEEERKAKYAKMEAERE. Residues 29–69 adopt a coiled-coil conformation; it reads DAAKKEEERQEALRQAEEERKAKYAKMEAEREAVRQGIRDK. Residues 48–70 form an interaction with the SNARE complex region; sequence RKAKYAKMEAEREAVRQGIRDKY.

Belongs to the complexin/synaphin family. In terms of assembly, binds to the SNARE core complex containing SNAP25, VAMP2 and STX1A. As to expression, nervous system. In hippocampus and cerebellum, expressed mainly by inhibitory neurons. Overexpressed in substantia nigra from patients with Parkinson disease.

It localises to the cytoplasm. Its subcellular location is the cytosol. The protein resides in the perikaryon. The protein localises to the presynapse. Its function is as follows. Positively regulates a late step in exocytosis of various cytoplasmic vesicles, such as synaptic vesicles and other secretory vesicles. Organizes the SNAREs into a cross-linked zigzag topology that, when interposed between the vesicle and plasma membranes, is incompatible with fusion, thereby preventing SNAREs from releasing neurotransmitters until an action potential arrives at the synapse. Also involved in glucose-induced secretion of insulin by pancreatic beta-cells. Essential for motor behavior. This is Complexin-1 (CPLX1) from Homo sapiens (Human).